The sequence spans 657 residues: 2',3'-cyclic-nucleotide 2'-phosphodiesterase/3'-nucleotidase (657 aa).

A signal peptide spans 1–26 (MMNRRHFIQISATSILALSANRFAMA). Residues aspartate 41, histidine 43, aspartate 86, asparagine 126, histidine 235, histidine 267, and histidine 269 each contribute to the a divalent metal cation site. Residues tyrosine 450 and 554 to 559 (YRAYGN) contribute to the substrate site.

Belongs to the 5'-nucleotidase family. A divalent metal cation serves as cofactor.

It localises to the periplasm. The enzyme catalyses a nucleoside 2',3'-cyclic phosphate + H2O = a nucleoside 3'-phosphate + H(+). It carries out the reaction a ribonucleoside 3'-phosphate + H2O = a ribonucleoside + phosphate. Its function is as follows. This bifunctional enzyme catalyzes two consecutive reactions during ribonucleic acid degradation. Converts a 2',3'-cyclic nucleotide to a 3'-nucleotide and then the 3'-nucleotide to the corresponding nucleoside and phosphate. The chain is 2',3'-cyclic-nucleotide 2'-phosphodiesterase/3'-nucleotidase (cpdB) from Haemophilus influenzae (strain ATCC 51907 / DSM 11121 / KW20 / Rd).